The primary structure comprises 650 residues: Chaperone protein HtpG (650 aa).

The interval 1 to 344 (MSKHTHSFQA…SADLPLNVSR (344 aa)) is a; substrate-binding. Positions 345 to 582 (ELLQESRDVR…DGGMSTQLAR (238 aa)) are b. Positions 583-650 (LLKQAGQSAP…YVKRVNALLA (68 aa)) are c.

This sequence belongs to the heat shock protein 90 family. In terms of assembly, homodimer.

Its subcellular location is the cytoplasm. Molecular chaperone. Has ATPase activity. The chain is Chaperone protein HtpG from Acidovorax sp. (strain JS42).